The sequence spans 396 residues: Elongation factor Tu 2 (396 aa).

In terms of domain architecture, tr-type G spans 10-206 (KPHINVGTIG…AMDAHIPQPE (197 aa)). A G1 region spans residues 19–26 (GHVDHGKT). 19–26 (GHVDHGKT) serves as a coordination point for GTP. Thr26 is a Mg(2+) binding site. A G2 region spans residues 60–64 (GITIA). The tract at residues 81–84 (DCPG) is G3. Residues 81-85 (DCPGH) and 136-139 (NKAD) each bind GTP. Residues 136–139 (NKAD) form a G4 region. The interval 174-176 (SAL) is G5.

The protein belongs to the TRAFAC class translation factor GTPase superfamily. Classic translation factor GTPase family. EF-Tu/EF-1A subfamily. Monomer.

Its subcellular location is the cytoplasm. It carries out the reaction GTP + H2O = GDP + phosphate + H(+). Functionally, GTP hydrolase that promotes the GTP-dependent binding of aminoacyl-tRNA to the A-site of ribosomes during protein biosynthesis. This chain is Elongation factor Tu 2, found in Halorhodospira halophila (strain DSM 244 / SL1) (Ectothiorhodospira halophila (strain DSM 244 / SL1)).